The following is a 493-amino-acid chain: Amidophosphoribosyltransferase (493 aa).

Positions 1–26 (MIPTQPLTADLDCDLGLERPDRPEEA) are excised as a propeptide. The active-site Nucleophile is the C27. The Glutamine amidotransferase type-2 domain occupies 27 to 252 (CGVFALYAPG…PGEMVRITDA (226 aa)). C268 serves as a coordination point for [4Fe-4S] cluster. Mg(2+) is bound by residues S315, D377, and D378. Residues C414, C465, and C468 each coordinate [4Fe-4S] cluster.

It in the C-terminal section; belongs to the purine/pyrimidine phosphoribosyltransferase family. Mg(2+) is required as a cofactor. It depends on [4Fe-4S] cluster as a cofactor.

It carries out the reaction 5-phospho-beta-D-ribosylamine + L-glutamate + diphosphate = 5-phospho-alpha-D-ribose 1-diphosphate + L-glutamine + H2O. Its pathway is purine metabolism; IMP biosynthesis via de novo pathway; N(1)-(5-phospho-D-ribosyl)glycinamide from 5-phospho-alpha-D-ribose 1-diphosphate: step 1/2. Its function is as follows. Catalyzes the formation of phosphoribosylamine from phosphoribosylpyrophosphate (PRPP) and glutamine. In Synechococcus elongatus (strain ATCC 33912 / PCC 7942 / FACHB-805) (Anacystis nidulans R2), this protein is Amidophosphoribosyltransferase.